The chain runs to 84 residues: Small ribosomal subunit protein bS16 (84 aa).

It belongs to the bacterial ribosomal protein bS16 family.

The chain is Small ribosomal subunit protein bS16 from Dechloromonas aromatica (strain RCB).